The following is a 219-amino-acid chain: Holliday junction branch migration complex subunit RuvA (219 aa).

The domain I stretch occupies residues 1-67 (MIGWLRGERI…DDGSSLFGFP (67 aa)). The domain II stretch occupies residues 68–146 (DRRERDLFRV…AWSAEKNSDH (79 aa)). The interval 147–161 (SDLSLVDRSDLKSLP) is flexible linker. A domain III region spans residues 162–219 (IEPDPLQDLQLTLSTLGYEDLEIRRAMRAVATGEEVPAANDGDGWLRASLRWLNRPSA).

Belongs to the RuvA family. As to quaternary structure, homotetramer. Forms an RuvA(8)-RuvB(12)-Holliday junction (HJ) complex. HJ DNA is sandwiched between 2 RuvA tetramers; dsDNA enters through RuvA and exits via RuvB. An RuvB hexamer assembles on each DNA strand where it exits the tetramer. Each RuvB hexamer is contacted by two RuvA subunits (via domain III) on 2 adjacent RuvB subunits; this complex drives branch migration. In the full resolvosome a probable DNA-RuvA(4)-RuvB(12)-RuvC(2) complex forms which resolves the HJ.

It localises to the cytoplasm. Its function is as follows. The RuvA-RuvB-RuvC complex processes Holliday junction (HJ) DNA during genetic recombination and DNA repair, while the RuvA-RuvB complex plays an important role in the rescue of blocked DNA replication forks via replication fork reversal (RFR). RuvA specifically binds to HJ cruciform DNA, conferring on it an open structure. The RuvB hexamer acts as an ATP-dependent pump, pulling dsDNA into and through the RuvAB complex. HJ branch migration allows RuvC to scan DNA until it finds its consensus sequence, where it cleaves and resolves the cruciform DNA. The sequence is that of Holliday junction branch migration complex subunit RuvA from Synechococcus sp. (strain CC9311).